A 574-amino-acid polypeptide reads, in one-letter code: Septation ring formation regulator EzrA (574 aa).

The Extracellular segment spans residues 1–7; that stretch reads MPTGTII. Residues 8 to 26 traverse the membrane as a helical segment; that stretch reads LIVSIVIILIIAYVACLIV. Residues 27–574 lie on the Cytoplasmic side of the membrane; that stretch reads RKRNDNLLVA…YEKTREAIRY (548 aa). A coiled-coil region spans residues 105–189; the sequence is SAKNAIDSID…IEVEFSEFVM (85 aa).

It belongs to the EzrA family.

The protein resides in the cell membrane. In terms of biological role, negative regulator of FtsZ ring formation; modulates the frequency and position of FtsZ ring formation. Inhibits FtsZ ring formation at polar sites. Interacts either with FtsZ or with one of its binding partners to promote depolymerization. This chain is Septation ring formation regulator EzrA, found in Streptococcus suis (strain 98HAH33).